An 811-amino-acid polypeptide reads, in one-letter code: Metal transporter cnnm-1 (811 aa).

An N-terminal signal peptide occupies residues 1–24 (MSASCLRLLTLSLFILGQCNVTAA). N-linked (GlcNAc...) asparagine glycans are attached at residues Asn20, Asn49, Asn61, and Asn122. The Extracellular portion of the chain corresponds to 25–204 (QNGVDDEVTT…KEYFLPLPLQ (180 aa)). In terms of domain architecture, CNNM transmembrane spans 197 to 376 (YFLPLPLQIA…TDNGQVSNEL (180 aa)). A helical transmembrane segment spans residues 205 to 225 (IACIGFLLCLSALFSGLTLGL). The Cytoplasmic portion of the chain corresponds to 226 to 259 (MSLTPQELELVIKSGAIKEQKCAAKILPVRKKGN). A helical transmembrane segment spans residues 260 to 280 (LLLCSLLLGNVIVNSAISILM). Topologically, residues 281 to 284 (GELT) are extracellular. Residues 285-305 (TGIYALIGSTMGIVIFGEILP) form a helical membrane-spanning segment. Over 306 to 315 (QSICVKKGLE) the chain is Cytoplasmic. The helical transmembrane segment at 316 to 336 (VGAHTISITQLFIFLTFPIAW) threads the bilayer. Topologically, residues 337-811 (PVSKLLDCLL…EEEMALLDQP (475 aa)) are extracellular. CBS domains follow at residues 394–456 (MTKI…NFTV) and 462–530 (YHKH…INDE). N-linked (GlcNAc...) asparagine glycans are attached at residues Asn435 and Asn453. The disordered stretch occupies residues 741-760 (DVSHNSSAHNSNLSLVEKPG). The span at 743–755 (SHNSSAHNSNLSL) shows a compositional bias: low complexity. Asn745 and Asn752 each carry an N-linked (GlcNAc...) asparagine glycan.

Belongs to the ACDP family. Highly expressed in the intestine and in neurons, but it is also expressed in a variety of tissues including the pharynx, hypodermis, rectum and in muscles.

The protein resides in the basolateral cell membrane. Functionally, probable metal transporter. Probably acts redundantly with the other metal transport proteins cnnm-2, cnnm-3, cnnm-4 and cnnm-5 to regulate Mg(2+) homeostasis. Promotes postembryonic gonad development by regulating Mg(2+) levels, probably via AMPK signaling. The chain is Metal transporter cnnm-1 from Caenorhabditis elegans.